The chain runs to 134 residues: Transcription antitermination protein NusB (134 aa).

This sequence belongs to the NusB family.

Functionally, involved in transcription antitermination. Required for transcription of ribosomal RNA (rRNA) genes. Binds specifically to the boxA antiterminator sequence of the ribosomal RNA (rrn) operons. This chain is Transcription antitermination protein NusB, found in Syntrophomonas wolfei subsp. wolfei (strain DSM 2245B / Goettingen).